The primary structure comprises 561 residues: Putative cuticle collagen 145 (561 aa).

Positions 1 to 30 (MEKILVTLSTGAASIAVLAVLFTIPSLYNT) are cleaved as a signal peptide. A compositionally biased stretch (pro residues) spans 100–112 (TCPPGPPGPPGQP). Disordered regions lie at residues 100-134 (TCPPGPPGPPGQPGQPGTPGAPGPKGEDNTSTYAP), 148-271 (PQGP…PGGP), 367-398 (TCPPGPPGPPGQPGQPGTPGAPGPKGEDNTAT), and 422-540 (TGPA…GPGL). Triple-helical region stretches follow at residues 102–127 (PPGPPGPPGQPGQPGTPGAPGPKGED) and 153–276 (GPEG…LPGN). Low complexity-rich tracts occupy residues 164–209 (AGPD…PGQD) and 219–265 (APGA…DGQP). A compositionally biased stretch (pro residues) spans 367–379 (TCPPGPPGPPGQP). Residues 413-544 (KCPQGPAGPT…PGGPGLPGND (132 aa)) form a triple-helical region region. Composition is skewed to low complexity over residues 422 to 467 (TGPA…PGQD) and 486 to 532 (APGA…DGQP). Residues 485-543 (GAPGAPGNAGPAGPAGQDGFPGQDGQPGPAGPAGQDGFPGNAGSDGQPGAPGGPGLPGN) enclose the Collagen-like domain.

The protein belongs to the cuticular collagen family. As to quaternary structure, collagen polypeptide chains are complexed within the cuticle by disulfide bonds and other types of covalent cross-links.

Functionally, nematode cuticles are composed largely of collagen-like proteins. The cuticle functions both as an exoskeleton and as a barrier to protect the worm from its environment. This chain is Putative cuticle collagen 145, found in Caenorhabditis briggsae.